Here is a 238-residue protein sequence, read N- to C-terminus: MIAFIVLLSLAAVLQQSSGTVDFASESSNKKDYRKEIVDKHNDLRRSVKPTARNMLQMKWNSRAAQNAKRWANRCTFAHSPPYTRTVGKLRCGENIFMSSQPFAWSGVVQAWYDEVKKFVYGIGAKPPSSVIGHYTQVVWYKSHLLGCASAKCSSTKYLYVCQYCPAGNIIGSIATPYKSGPPCGDCPSACDNGLCTNPCKHNDDLSNCKPLAKKSKCQTEWIKSKCPATCFCRTEII.

The first 19 residues, 1-19 (MIAFIVLLSLAAVLQQSSG), serve as a signal peptide directing secretion. Residues 20–28 (TVDFASESS) constitute a propeptide that is removed on maturation. An SCP domain is found at 38 to 164 (VDKHNDLRRS…STKYLYVCQY (127 aa)). 8 cysteine pairs are disulfide-bonded: cysteine 75/cysteine 153, cysteine 92/cysteine 165, cysteine 148/cysteine 162, cysteine 184/cysteine 191, cysteine 187/cysteine 196, cysteine 200/cysteine 233, cysteine 209/cysteine 227, and cysteine 218/cysteine 231. Positions 200–233 (CKHNDDLSNCKPLAKKSKCQTEWIKSKCPATCFC) constitute a ShKT domain.

It belongs to the CRISP family. Expressed by the venom gland.

The protein resides in the secreted. Its function is as follows. Blocks olfactory (CNGA2) and retinal (CNGA1) CNG channel currents. Does not affect neither depolarization- nor caffeine-induced contraction of smooth muscle. The chain is Cysteine-rich venom protein pseudechetoxin-like from Oxyuranus microlepidotus (Inland taipan).